A 554-amino-acid chain; its full sequence is Phosphomannomutase (554 aa).

The active-site Phosphoserine intermediate is serine 149. Mg(2+) contacts are provided by serine 149, aspartate 301, aspartate 303, and aspartate 305.

This sequence belongs to the phosphohexose mutase family. Mg(2+) serves as cofactor.

It catalyses the reaction alpha-D-mannose 1-phosphate = D-mannose 6-phosphate. This chain is Phosphomannomutase (manB), found in Mycoplasma pneumoniae (strain ATCC 29342 / M129 / Subtype 1) (Mycoplasmoides pneumoniae).